A 238-amino-acid chain; its full sequence is Uridylate kinase (238 aa).

Position 12–15 (12–15 (KLSG)) interacts with ATP. G54 contacts UMP. Positions 55 and 59 each coordinate ATP. UMP is bound by residues D74 and 135 to 142 (TGNPYFTT). T162, Y168, and D171 together coordinate ATP.

This sequence belongs to the UMP kinase family. As to quaternary structure, homohexamer.

The protein resides in the cytoplasm. The enzyme catalyses UMP + ATP = UDP + ADP. It functions in the pathway pyrimidine metabolism; CTP biosynthesis via de novo pathway; UDP from UMP (UMPK route): step 1/1. Its activity is regulated as follows. Inhibited by UTP. Catalyzes the reversible phosphorylation of UMP to UDP. The sequence is that of Uridylate kinase from Oleidesulfovibrio alaskensis (strain ATCC BAA-1058 / DSM 17464 / G20) (Desulfovibrio alaskensis).